The primary structure comprises 264 residues: Acyl-[acyl-carrier-protein]--UDP-N-acetylglucosamine O-acyltransferase (264 aa).

It belongs to the transferase hexapeptide repeat family. LpxA subfamily. In terms of assembly, homotrimer.

The protein localises to the cytoplasm. The enzyme catalyses a (3R)-hydroxyacyl-[ACP] + UDP-N-acetyl-alpha-D-glucosamine = a UDP-3-O-[(3R)-3-hydroxyacyl]-N-acetyl-alpha-D-glucosamine + holo-[ACP]. The protein operates within glycolipid biosynthesis; lipid IV(A) biosynthesis; lipid IV(A) from (3R)-3-hydroxytetradecanoyl-[acyl-carrier-protein] and UDP-N-acetyl-alpha-D-glucosamine: step 1/6. Involved in the biosynthesis of lipid A, a phosphorylated glycolipid that anchors the lipopolysaccharide to the outer membrane of the cell. In Chlorobium phaeobacteroides (strain DSM 266 / SMG 266 / 2430), this protein is Acyl-[acyl-carrier-protein]--UDP-N-acetylglucosamine O-acyltransferase.